The chain runs to 178 residues: MSKKWYVVQAYSGFEKNVQRILEERIAREEMGDYFGQILVPVEKVVDIRNGRKTISERKSYPGYVLVEMEMTDDSWHLVKSTPRVSGFIGGRANRPTPISQREAEIILQQVQTGIEKPKPKVEFEVGQQVRVNEGPFADFNGVVEEVNYERNKLRVSVQIFGRETPVELEFSQVEKIN.

Positions 126 to 156 (VGQQVRVNEGPFADFNGVVEEVNYERNKLRV) constitute a KOW domain.

It belongs to the NusG family.

Functionally, participates in transcription elongation, termination and antitermination. The sequence is that of Transcription termination/antitermination protein NusG from Neisseria meningitidis serogroup B (strain ATCC BAA-335 / MC58).